A 427-amino-acid polypeptide reads, in one-letter code: 3-phosphoshikimate 1-carboxyvinyltransferase (427 aa).

Residues Lys-21, Ser-22, and Arg-26 each coordinate 3-phosphoshikimate. Lys-21 is a binding site for phosphoenolpyruvate. Phosphoenolpyruvate contacts are provided by Gly-93 and Arg-121. 4 residues coordinate 3-phosphoshikimate: Ser-166, Gln-168, Asp-314, and Lys-341. Gln-168 is a binding site for phosphoenolpyruvate. The active-site Proton acceptor is the Asp-314. 2 residues coordinate phosphoenolpyruvate: Arg-345 and Arg-387.

The protein belongs to the EPSP synthase family. As to quaternary structure, monomer.

It localises to the cytoplasm. It catalyses the reaction 3-phosphoshikimate + phosphoenolpyruvate = 5-O-(1-carboxyvinyl)-3-phosphoshikimate + phosphate. It participates in metabolic intermediate biosynthesis; chorismate biosynthesis; chorismate from D-erythrose 4-phosphate and phosphoenolpyruvate: step 6/7. In terms of biological role, catalyzes the transfer of the enolpyruvyl moiety of phosphoenolpyruvate (PEP) to the 5-hydroxyl of shikimate-3-phosphate (S3P) to produce enolpyruvyl shikimate-3-phosphate and inorganic phosphate. This Alkaliphilus oremlandii (strain OhILAs) (Clostridium oremlandii (strain OhILAs)) protein is 3-phosphoshikimate 1-carboxyvinyltransferase.